A 200-amino-acid chain; its full sequence is Small ribosomal subunit protein uS4c (200 aa).

Residues 90–150 (MRLDNIIFRL…NRKESVIIKN (61 aa)) form the S4 RNA-binding domain.

It belongs to the universal ribosomal protein uS4 family. As to quaternary structure, part of the 30S ribosomal subunit. Contacts protein S5. The interaction surface between S4 and S5 is involved in control of translational fidelity.

It localises to the plastid. It is found in the chloroplast. One of the primary rRNA binding proteins, it binds directly to 16S rRNA where it nucleates assembly of the body of the 30S subunit. Functionally, with S5 and S12 plays an important role in translational accuracy. The sequence is that of Small ribosomal subunit protein uS4c (rps4) from Pellia neesiana (Liverwort).